A 417-amino-acid chain; its full sequence is Histidine--tRNA ligase (417 aa).

The protein belongs to the class-II aminoacyl-tRNA synthetase family. In terms of assembly, homodimer.

The protein resides in the cytoplasm. The catalysed reaction is tRNA(His) + L-histidine + ATP = L-histidyl-tRNA(His) + AMP + diphosphate + H(+). This is Histidine--tRNA ligase from Nitratidesulfovibrio vulgaris (strain ATCC 29579 / DSM 644 / CCUG 34227 / NCIMB 8303 / VKM B-1760 / Hildenborough) (Desulfovibrio vulgaris).